Consider the following 84-residue polypeptide: Toxin Ts4 (84 aa).

The signal sequence occupies residues 1–19; that stretch reads MKRMILFISCLLLIDIVVG. The LCN-type CS-alpha/beta domain maps to 21-82; the sequence is REGYPADSKG…IWTSETNKCG (62 aa). 4 disulfide bridges follow: Cys31–Cys81, Cys35–Cys57, Cys43–Cys62, and Cys47–Cys64. Position 81 is a cysteine amide (Cys81). Residues 82–84 constitute a propeptide that is removed on maturation; sequence GKK.

Belongs to the long (4 C-C) scorpion toxin superfamily. Sodium channel inhibitor family. Alpha subfamily. In terms of tissue distribution, expressed by the venom gland.

It is found in the secreted. Functionally, not toxic. Induces an immune response similar to that induced by whole venom. Induces a dose dependent release of the neurotransmitters glutamic acid and gamma aminobutyric acid from rat brain synaptosomes. Thus, polyclonal antibodies raised against this protein can neutralize the effects of the venom. This chain is Toxin Ts4, found in Tityus serrulatus (Brazilian scorpion).